The chain runs to 326 residues: Homeobox protein Hox-A1 (326 aa).

The Antp-type hexapeptide signature appears at 196-201 (TFDWMK). The homeobox DNA-binding region spans 221–280 (PNTVRTNFTTKQLTELEKEFHFNKYLTRARRVEIAAALQLNETQVKIWFQNRRMKQKKRE). The disordered stretch occupies residues 273 to 326 (RMKQKKREKEGLTSASPATPGSEANTEDTSDKCNSTSSTPSPSSSTSETINTSG). The span at 285–296 (TSASPATPGSEA) shows a compositional bias: polar residues. A compositionally biased stretch (low complexity) spans 306 to 326 (NSTSSTPSPSSSTSETINTSG).

This sequence belongs to the Antp homeobox family. Labial subfamily.

It localises to the nucleus. In terms of biological role, sequence-specific transcription factor. Part of a developmental regulatory system that provides cells with specific positional identities on the anterior-posterior axis. Acts on the anterior body structures. Seems to act in the maintenance and/or generation of hindbrain segments. The chain is Homeobox protein Hox-A1 (HOXA1) from Heterodontus francisci (Horn shark).